We begin with the raw amino-acid sequence, 491 residues long: MSRIMIQGTASSVGKSILVAALCRIFKQDGFSVCPYKSQNMSLNSYITLDGKEMGRAQVLQAYAAGLEPEVYMNPILLKPTTDKSCQVIVKGEVYGVSSAKNYYNMKKEFAPMLKEDFEELEDKFDIVVIEGAGSPAEINLRENDIVNMGLAELVDAPVVLVGDIDKGGVFASLFGTVMLLEENERKRIKGTIINKFRGDVEILKPGLSMLEERINIPCFGVVPYFNLSLEDEDGAVYFNTKVNSKIDVAVIKLPHISNFTDIDALKIEEDVSLRYITSSENFGTPDLLIIPGSKNTIGDLLYIRKNGIENKIKQYAEKNGLIFGICGGYQMLGRLIEDPFKVETELGEINGMGLLDIRTVFAEKKVTTRVQGSVIDKQIPVYGYEIHMGISSYGEKAKPFIKIENKVGIDDGAVNEGGNIMGTYIHGIFDGANFREYIINFLRDKKGIERKKSVVYEDVRNGEIDRLADIVRNSLDMNSIYSVMGIEGKK.

In terms of domain architecture, GATase cobBQ-type spans 246 to 435 (KIDVAVIKLP…IHGIFDGANF (190 aa)). Cysteine 327 acts as the Nucleophile in catalysis. Residue histidine 427 is part of the active site.

Belongs to the CobB/CobQ family. CobQ subfamily.

The protein operates within cofactor biosynthesis; adenosylcobalamin biosynthesis. Functionally, catalyzes amidations at positions B, D, E, and G on adenosylcobyrinic A,C-diamide. NH(2) groups are provided by glutamine, and one molecule of ATP is hydrogenolyzed for each amidation. The protein is Cobyric acid synthase of Clostridium acetobutylicum (strain ATCC 824 / DSM 792 / JCM 1419 / IAM 19013 / LMG 5710 / NBRC 13948 / NRRL B-527 / VKM B-1787 / 2291 / W).